Reading from the N-terminus, the 752-residue chain is Phosphoribosylformylglycinamidine synthase subunit PurL (752 aa).

His-58 is a catalytic residue. The ATP site is built by Tyr-61 and Lys-103. Mg(2+) is bound at residue Glu-105. Substrate-binding positions include 106–109 (SHNH) and Arg-128. The active-site Proton acceptor is the His-107. Asp-129 is a Mg(2+) binding site. Gln-253 is a binding site for substrate. Residue Asp-281 participates in Mg(2+) binding. A substrate-binding site is contributed by 325 to 327 (ESQ). Residues Asp-513 and Gly-550 each contribute to the ATP site. Asn-551 is a binding site for Mg(2+). A substrate-binding site is contributed by Ser-553.

Belongs to the FGAMS family. In terms of assembly, monomer. Part of the FGAM synthase complex composed of 1 PurL, 1 PurQ and 2 PurS subunits.

The protein resides in the cytoplasm. The catalysed reaction is N(2)-formyl-N(1)-(5-phospho-beta-D-ribosyl)glycinamide + L-glutamine + ATP + H2O = 2-formamido-N(1)-(5-O-phospho-beta-D-ribosyl)acetamidine + L-glutamate + ADP + phosphate + H(+). The protein operates within purine metabolism; IMP biosynthesis via de novo pathway; 5-amino-1-(5-phospho-D-ribosyl)imidazole from N(2)-formyl-N(1)-(5-phospho-D-ribosyl)glycinamide: step 1/2. Functionally, part of the phosphoribosylformylglycinamidine synthase complex involved in the purines biosynthetic pathway. Catalyzes the ATP-dependent conversion of formylglycinamide ribonucleotide (FGAR) and glutamine to yield formylglycinamidine ribonucleotide (FGAM) and glutamate. The FGAM synthase complex is composed of three subunits. PurQ produces an ammonia molecule by converting glutamine to glutamate. PurL transfers the ammonia molecule to FGAR to form FGAM in an ATP-dependent manner. PurS interacts with PurQ and PurL and is thought to assist in the transfer of the ammonia molecule from PurQ to PurL. This chain is Phosphoribosylformylglycinamidine synthase subunit PurL, found in Streptomyces avermitilis (strain ATCC 31267 / DSM 46492 / JCM 5070 / NBRC 14893 / NCIMB 12804 / NRRL 8165 / MA-4680).